A 341-amino-acid chain; its full sequence is Undecaprenyl-phosphate 4-deoxy-4-formamido-L-arabinose transferase (341 aa).

2 consecutive transmembrane segments (helical) span residues 235–255 (LSIVGFSLAALGMLFAFALIV) and 269–289 (LFVLFAVLFVFTGGQFIGMGL).

It belongs to the glycosyltransferase 2 family.

It is found in the cell inner membrane. It carries out the reaction UDP-4-deoxy-4-formamido-beta-L-arabinose + di-trans,octa-cis-undecaprenyl phosphate = 4-deoxy-4-formamido-alpha-L-arabinopyranosyl di-trans,octa-cis-undecaprenyl phosphate + UDP. It participates in glycolipid biosynthesis; 4-amino-4-deoxy-alpha-L-arabinose undecaprenyl phosphate biosynthesis; 4-amino-4-deoxy-alpha-L-arabinose undecaprenyl phosphate from UDP-4-deoxy-4-formamido-beta-L-arabinose and undecaprenyl phosphate: step 1/2. It functions in the pathway bacterial outer membrane biogenesis; lipopolysaccharide biosynthesis. In terms of biological role, catalyzes the transfer of 4-deoxy-4-formamido-L-arabinose from UDP to undecaprenyl phosphate. The modified arabinose is attached to lipid A and is required for resistance to polymyxin and cationic antimicrobial peptides. The sequence is that of Undecaprenyl-phosphate 4-deoxy-4-formamido-L-arabinose transferase from Pseudomonas fluorescens (strain SBW25).